Here is a 259-residue protein sequence, read N- to C-terminus: Hemin import ATP-binding protein HmuV (259 aa).

The region spanning 8–242 (ISANNISYRI…KMIENVYGHK (235 aa)) is the ABC transporter domain. Position 40-47 (40-47 (GPNGAGKS)) interacts with ATP.

It belongs to the ABC transporter superfamily. Heme (hemin) importer (TC 3.A.1.14.5) family. The complex is composed of two ATP-binding proteins (HmuV), two transmembrane proteins (HmuU) and a solute-binding protein (HmuT).

It is found in the cell inner membrane. Functionally, part of the ABC transporter complex HmuTUV involved in hemin import. Responsible for energy coupling to the transport system. This is Hemin import ATP-binding protein HmuV from Aliivibrio fischeri (strain ATCC 700601 / ES114) (Vibrio fischeri).